The primary structure comprises 241 residues: MTLVNPSEKLILALDGMDVLEALSFIDKVPDLIWVKVGLELFATSGLEIFTELRARGKKVFLDLKFHDIPNTMAGACYRAARNGAELITVHACAGSKALLVANEAAKKGAASVGLPSPTLLGVTVLTSWTSYEFGDELDIHHSLEKRVEHLAQLAFKAGLGGCICSPCEVKRLREIFPESFELITPGIRFLDSGLDDQARVMQPRDAFTSGASRLVLGRIITRSTNPAEAFTRVCRDIQTD.

Substrate is bound by residues D15, K36, 63-72 (DLKFHDIPNT), T127, R189, Q198, G218, and R219. K65 (proton donor) is an active-site residue.

It belongs to the OMP decarboxylase family. Type 1 subfamily. As to quaternary structure, homodimer.

It catalyses the reaction orotidine 5'-phosphate + H(+) = UMP + CO2. It functions in the pathway pyrimidine metabolism; UMP biosynthesis via de novo pathway; UMP from orotate: step 2/2. Functionally, catalyzes the decarboxylation of orotidine 5'-monophosphate (OMP) to uridine 5'-monophosphate (UMP). The sequence is that of Orotidine 5'-phosphate decarboxylase from Prochlorococcus marinus (strain MIT 9211).